The following is a 276-amino-acid chain: MPNAPLRTAIEALWERRATLSARTEGEDRDVVEKVLSALDAGTLRVAEPFADGWTVHEWLKKAVLLSFRLNDSRVMERGCGGEPAFDKVPLKFDGWDQFRFAEAGFRAVPGAIVRRSAFIAPNVVLMPSFVNVGARVDSGTMIDTWATVGSCAQIGKNCHISGGAGIGGVLEPLQAAPVIIEDDCFIGARSEVAEGVIVEKGSVLSMGVFLGASTKIVDRATGEIFMGRVPAYSVVVPGTLPPKEPGMPSLACAVIVKRVDERTRSKTSINDLLRD.

Positions 107 and 144 each coordinate substrate.

This sequence belongs to the transferase hexapeptide repeat family. In terms of assembly, homotrimer.

The protein localises to the cytoplasm. The catalysed reaction is (S)-2,3,4,5-tetrahydrodipicolinate + succinyl-CoA + H2O = (S)-2-succinylamino-6-oxoheptanedioate + CoA. It participates in amino-acid biosynthesis; L-lysine biosynthesis via DAP pathway; LL-2,6-diaminopimelate from (S)-tetrahydrodipicolinate (succinylase route): step 1/3. The polypeptide is 2,3,4,5-tetrahydropyridine-2,6-dicarboxylate N-succinyltransferase (Gluconobacter oxydans (strain 621H) (Gluconobacter suboxydans)).